We begin with the raw amino-acid sequence, 203 residues long: Small ribosomal subunit protein uS4c (203 aa).

The S4 RNA-binding domain maps to Met89–Leu152.

This sequence belongs to the universal ribosomal protein uS4 family. In terms of assembly, part of the 30S ribosomal subunit. Contacts protein S5. The interaction surface between S4 and S5 is involved in control of translational fidelity.

Its subcellular location is the plastid. In terms of biological role, one of the primary rRNA binding proteins, it binds directly to 16S rRNA where it nucleates assembly of the body of the 30S subunit. With S5 and S12 plays an important role in translational accuracy. This chain is Small ribosomal subunit protein uS4c (rps4), found in Orobanche minor (Small broomrape).